We begin with the raw amino-acid sequence, 198 residues long: Ras-related protein RabH (198 aa).

14-21 provides a ligand contact to GTP; that stretch reads GDWNVGKS. An Effector region motif is present at residues 36-44; the sequence is TKLSMGEHF. Residues 62-66 and 120-123 contribute to the GTP site; these read DTSGM and SKFD. C195 is subject to Cysteine methyl ester. Residue C195 is the site of S-geranylgeranyl cysteine attachment. Residues 196-198 constitute a propeptide, removed in mature form; it reads SIN.

This sequence belongs to the small GTPase superfamily. Rab family.

It is found in the cell membrane. In Dictyostelium discoideum (Social amoeba), this protein is Ras-related protein RabH (rabH).